A 135-amino-acid polypeptide reads, in one-letter code: Large ribosomal subunit protein uL18 (135 aa).

Residues 1–25 (MAQTENQKSKRIPLGKDVSTQRRLS) are disordered.

It belongs to the universal ribosomal protein uL18 family. In terms of assembly, part of the 50S ribosomal subunit; part of the 5S rRNA/L5/L18/L25 subcomplex. Contacts the 5S and 23S rRNAs.

In terms of biological role, this is one of the proteins that bind and probably mediate the attachment of the 5S RNA into the large ribosomal subunit, where it forms part of the central protuberance. This Nocardia farcinica (strain IFM 10152) protein is Large ribosomal subunit protein uL18.